The sequence spans 283 residues: Non-selective voltage-gated ion channel VDAC3 (283 aa).

An N-acetylcysteine modification is found at cysteine 2. A Phosphothreonine modification is found at threonine 4. Residues lysine 12, lysine 15, and lysine 20 each carry the N6-acetyllysine modification. Beta stranded transmembrane passes span 26–35 (MVKIDLKTKS) and 39–47 (VEFSTSGHA). Threonine 33 is subject to Phosphothreonine. A Glycyl lysine isopeptide (Lys-Gly) (interchain with G-Cter in ubiquitin) cross-link involves residue lysine 53. 3 consecutive transmembrane segments (beta stranded) span residues 54 to 64 (ASGNLETKYKV), 69 to 76 (LIFTQKWN), and 80 to 89 (TLGTEISWEN). Lysine 90 carries the N6-acetyllysine modification. A beta stranded membrane pass occupies residues 95–104 (LKLTVDTIFV). Residues lysine 109 and lysine 110 each participate in a glycyl lysine isopeptide (Lys-Gly) (interchain with G-Cter in ubiquitin) cross-link. A run of 10 beta stranded transmembrane segments spans residues 111–120 (SGKLKASYRR), 123–130 (FSVGSKVD), 137–145 (TIYGWAVLA), 150–158 (LAGYQMSFD), 163–175 (KLCQ…GYKA), 178–185 (FQLHTHVN), 189–198 (EFGGSIYQRV), 202–211 (IETSINLAWT), 218–227 (RFGIAAKYRL), and 231–238 (TSLSAKVN). Position 241 is a phosphoserine (serine 241). Residues 242 to 244 (LIG) and 260 to 264 (SALVD) each bind NAD(+). 2 consecutive transmembrane segments (beta stranded) span residues 242-251 (LIGLGYTQSL) and 254-263 (GVKLTLSALV). Lysine 266 is subject to N6-acetyllysine; alternate. A Glycyl lysine isopeptide (Lys-Gly) (interchain with G-Cter in ubiquitin); alternate cross-link involves residue lysine 266. The chain crosses the membrane as a beta stranded span at residues 273–282 (HKVGLGFELE).

The protein belongs to the eukaryotic mitochondrial porin family. Interacts with ARMC12 in a TBC1D21-dependent manner. Interacts with MISFA. Ubiquitinated by PRKN during mitophagy, leading to its degradation and enhancement of mitophagy. Deubiquitinated by USP30. Isoform 1 is widely expressed with strong expression in atrium and ascitic tumor, lower levels in brain and very low levels in liver and kidney. Isoform 2 is also widely expressed with highest levels in brain but no expression in kidney. Also expressed in flagella of epididymal sperm.

The protein resides in the mitochondrion outer membrane. The protein localises to the membrane. The enzyme catalyses chloride(in) = chloride(out). The catalysed reaction is K(+)(in) = K(+)(out). Functionally, non-selective voltage-gated ion channel that mediates the transport of anions and cations through the mitochondrion outer membrane and plasma membrane. Forms a high-conducting channel with a stable open state and a voltage-induced closure with a mild preference for anions over cations. Involved in male fertility and sperm mitochondrial sheath formation. In Rattus norvegicus (Rat), this protein is Non-selective voltage-gated ion channel VDAC3.